A 310-amino-acid polypeptide reads, in one-letter code: Olfactory receptor 5P55 (310 aa).

Topologically, residues 1-25 (METQNHTTVTEFILLGLTESSTLRV) are extracellular. The N-linked (GlcNAc...) asparagine glycan is linked to N5. Residues 26-46 (ILFMVFLGIYTVTLVGNFSII) form a helical membrane-spanning segment. At 47–54 (SLIRSCPQ) the chain is on the cytoplasmic side. Residues 55-75 (LHTPMYLFLSHLAFVDIGFST) traverse the membrane as a helical segment. Residues 76 to 99 (SITPTMFKGFLGNRLVLSVAACIA) are Extracellular-facing. The cysteines at positions 97 and 189 are disulfide-linked. A helical membrane pass occupies residues 100–120 (QFCITVTFGTVECFLLAVMAY). At 121–133 (DRYVAICSPLLYS) the chain is on the cytoplasmic side. A helical membrane pass occupies residues 134-154 (THMSPRICFLLVGASYVGGCV). The Extracellular segment spans residues 155–196 (NSGAFTSCLSILSFCGPNQIDHFFCDFPAVLKLSCSDVSIIG). The helical transmembrane segment at 197–217 (IIPSISAGSIIVITVFVIAVS) threads the bilayer. The Cytoplasmic portion of the chain corresponds to 218 to 237 (YAYILITILKMRSTEGRQKA). A helical membrane pass occupies residues 238–258 (FSTCTSHLTAVTLYYGTITFI). Topologically, residues 259 to 271 (YVMPKSNYSTAQN) are extracellular. N265 is a glycosylation site (N-linked (GlcNAc...) asparagine). The chain crosses the membrane as a helical span at residues 272–292 (KILSVFYTVVIPMLNPLIYSL). The Cytoplasmic portion of the chain corresponds to 293–310 (RNRDVKEALRKAIIRIFP).

This sequence belongs to the G-protein coupled receptor 1 family.

The protein resides in the cell membrane. In terms of biological role, potential odorant receptor. The protein is Olfactory receptor 5P55 of Mus musculus (Mouse).